A 488-amino-acid polypeptide reads, in one-letter code: L-arabinose isomerase 1 (488 aa).

Mn(2+) contacts are provided by E306, E331, H348, and H447.

The protein belongs to the arabinose isomerase family. Requires Mn(2+) as cofactor.

It catalyses the reaction beta-L-arabinopyranose = L-ribulose. Its pathway is carbohydrate degradation; L-arabinose degradation via L-ribulose; D-xylulose 5-phosphate from L-arabinose (bacterial route): step 1/3. Its function is as follows. Catalyzes the conversion of L-arabinose to L-ribulose. This is L-arabinose isomerase 1 from Clostridium acetobutylicum (strain ATCC 824 / DSM 792 / JCM 1419 / IAM 19013 / LMG 5710 / NBRC 13948 / NRRL B-527 / VKM B-1787 / 2291 / W).